The primary structure comprises 1876 residues: MLRSGAASASSGGGRGPSSSLSSVKRSKHDDTRLPEAYQQERPPWRPPLHPTAARRHVPDLFPTKSGQPEDDMSQISVRKGFAPRTYVHNEYFCAHDAIHTRLLSPDALDTLSDWMDEVMQRRRELDRASIATNQYKPPSRVTLNDAKLANYVKDLADPTVPLMRLSRSVPHGFRGEKLFEMLWVGGALPSTATAATTTVNYFHSRIAGPPSASSASASASASASTSAPRKSVDIPRAVWFIRALGAAELSSLRNKSAATIIPEITSNLCAWMAKQVAELNLVHTAESNSTATASPAPVSPSTHLPRTPSAAPSSLSRSVAAAHFARTPSNLNPASSPSLAPAKEVCYVLQNDADEERWIAKWSYSLSLARHLHAQNLLDRSVLVRWIVDAFSASNLVQLPFLLELVQEVLLLVLRRRCFVKPFLTALLVQIPNVDARLDPSSSGGLRTKLVLLFRIVCENSPESLISPRLWFEHSASLTQLLNELNAETPLPLSHQAFEFVEQTVRPRVDRLLLRPHSGNTTQNASLETQETLSSPLQHHLDIQALDSFDMTTIDRVFLQNTSATHRYAKHDRDDTVWATRIDTILTWACTDRRSGVVRQYLAATLIEKIRFGVPWEESSEETDQVSLPAFDLEHNTTKTRKINVEPMLIKWLGDVETSLNQKLDESSTQTRVSLLATVDVGAIVVLLGELARRGVFSYTKYLQRLIARGMTAPSASSATEQHQNPDGSVQTPSSVSASRDSLHLRLLRSLPLYDQPASVYQQRRQAIYGDRTKETYEDAAQRRALRQLQSFLPFAFAQEVQAEASRIAVSPSPSTPDPVHALSRLWSASRFVRCRLFRSELLPAVTARVERLNGDQLSQISAVLVMADDFEGLAQLLATLLLRPLSDNLARAAFNMVIEYSLVWRSMDIMATLNQLVRQQLNHSSSIRNDRQAVMASTTLLRLRTLIENVPSRISASALDPGADHDALQQHVQALRPNVDALLDRFAKLTRSSVESDGSIASSSTPVEGSDMLTPFRSLFVQPDAMSDEMIERTIVDSVFARSDTSLVPSAVRLIDQLYLEASLEIDERHARWLSNLVLSIEQGTHSDASMKALLSLLTRLIAHGTLNLQLAMDTFLLPYLLSSVRRLTDPATRNTEVPMHIGSIVSSLGEIFASSLGETVPATSYEDMRAFGAQTKLLFAQVNLPSLLRAATCLISAFDETSTVPASEKAQIESFCNALLQSQPMQIAFRQEPRLCILAIKDTCKSMWGCNPSRVIDLAMACLDPTSLLLRDVGTIDAASVKNRLDGWDTAVVATELVEIFERLQLVESSFQTRADSKTKALASGIFDDLFVQLPDIGAQLVRDCQSSGLVSRFTDIGIKILSDKVKAASTDADKTPRRMDNSHKGMTNFGPDDGADAPAQAKTAADAAKHGPCVGEQQVESTLRSVVRMCEQQHSFIFNATDADSCAQLLLHVVTSLEDALGSMAAASHQDKVARLVTVLHGSMTFQLMHLVLRFGCLWNGTMRALALRLVKALLELTRQAGEKTECGGSFALLLDSLSFVLDELPPTLLSTCLPELETQLQTIELATQERSDKLQQLSFRLDNATTANAWLVASSAGAALKKGWFTSGGLNPWECAEYLEAPPAANPAAAGAAGAAGAAAGGNARAGVVETGRSGVNSRAAVESPGAVTVNDAETCNSLPGARTGWTGKLWLNTAIPLSMLGVRVTRDLVPNYASPASPGGVSVGSNDASSQPWTTGGGASAIGVGTCSAMDMDAKEALAALPMFVESERTYGERSAGEPAYSRDLRRGLLVEPNLPCRTRDERGETSQEPARATMDPAGAHTSVTSSATHDPSHVIDLTWDADEEMPLSTHPHHPAVATTSRKRRLSKRD.

Residues 1-10 (MLRSGAASAS) show a composition bias toward low complexity. Disordered stretches follow at residues 1-75 (MLRS…DMSQ), 291-314 (TATA…AAPS), 715-737 (PSAS…PSSV), 1373-1405 (STDA…PAQA), and 1801-1876 (LPCR…SKRD). The span at 1373–1387 (STDADKTPRRMDNSH) shows a compositional bias: basic and acidic residues. Over residues 1394–1405 (GPDDGADAPAQA) the composition is skewed to low complexity. A compositionally biased stretch (basic residues) spans 1867–1876 (SRKRRLSKRD).

The protein belongs to the Mediator complex subunit 12 family. In terms of assembly, component of the SRB8-11 complex, which itself associates with the Mediator complex.

Its subcellular location is the nucleus. Functionally, component of the SRB8-11 complex. The SRB8-11 complex is a regulatory module of the Mediator complex which is itself involved in regulation of basal and activated RNA polymerase II-dependent transcription. The SRB8-11 complex may be involved in the transcriptional repression of a subset of genes regulated by Mediator. It may inhibit the association of the Mediator complex with RNA polymerase II to form the holoenzyme complex. This Mycosarcoma maydis (Corn smut fungus) protein is Mediator of RNA polymerase II transcription subunit 12 (SRB8).